Consider the following 363-residue polypeptide: uncharacterized protein (363 aa).

The next 7 membrane-spanning stretches (helical) occupy residues 20-40 (WFFTLVEMILAVGGLIMNTNI), 63-83 (INFAILSGFQLARNFFLFLVM), 101-121 (FPLIFCYIHCAASFFLLGVQS), 141-161 (SVWQSTIAAVCVALSLLFTAF), 186-206 (FSLLTLLILLHATGLIFIMLA), 227-247 (IFKYETLAWQISLFISGCVVL), and 268-288 (FLIVPLLISFMHPLYLIWYVL). Residues 329–363 (PRADLTPNDTLHMESKKKPLSQSPRVVIEEEDVAE) form a disordered region.

The protein localises to the membrane. This is an uncharacterized protein from Caenorhabditis elegans.